The chain runs to 228 residues: PKHD-type hydroxylase Vapar_1809 (228 aa).

One can recognise a Fe2OG dioxygenase domain in the interval 78-179 (QISPPLFNRY…RTASYFWIQS (102 aa)). His97, Asp99, and His160 together coordinate Fe cation. Arg170 lines the 2-oxoglutarate pocket.

Fe(2+) is required as a cofactor. It depends on L-ascorbate as a cofactor.

This is PKHD-type hydroxylase Vapar_1809 from Variovorax paradoxus (strain S110).